Here is a 381-residue protein sequence, read N- to C-terminus: Cytochrome b (381 aa).

4 helical membrane-spanning segments follow: residues 34–54, 78–99, 114–134, and 179–199; these read FGSL…FLAM, WLIR…YFHI, WNIG…GYVL, and FFAF…IHIL. Heme b contacts are provided by histidine 84 and histidine 98. Heme b contacts are provided by histidine 183 and histidine 197. Histidine 202 is a binding site for a ubiquinone. 4 helical membrane passes run 227–247, 289–309, 321–341, and 348–368; these read YKDA…ALFL, LGGV…PFLH, LTQV…WIGG, and FILI…IAIP.

Belongs to the cytochrome b family. As to quaternary structure, the cytochrome bc1 complex contains 3 respiratory subunits (MT-CYB, CYC1 and UQCRFS1), 2 core proteins (UQCRC1 and UQCRC2) and probably 6 low-molecular weight proteins. Heme b is required as a cofactor.

The protein localises to the mitochondrion inner membrane. Its function is as follows. Component of the ubiquinol-cytochrome c reductase complex (complex III or cytochrome b-c1 complex) that is part of the mitochondrial respiratory chain. The b-c1 complex mediates electron transfer from ubiquinol to cytochrome c. Contributes to the generation of a proton gradient across the mitochondrial membrane that is then used for ATP synthesis. This Carcharodon carcharias (Great white shark) protein is Cytochrome b (mt-cyb).